The chain runs to 244 residues: Ureidoacrylate amidohydrolase RutB (244 aa).

D38 functions as the Proton acceptor in the catalytic mechanism. Residue K147 is part of the active site. The active-site Nucleophile is the C180.

This sequence belongs to the isochorismatase family. RutB subfamily.

It catalyses the reaction (Z)-3-ureidoacrylate + H2O + H(+) = (Z)-3-aminoacrylate + NH4(+) + CO2. It carries out the reaction (Z)-3-ureidoacrylate + H2O = (Z)-3-aminoacrylate + carbamate + H(+). The catalysed reaction is (Z)-2-methylureidoacrylate + H2O + H(+) = (Z)-2-methylaminoacrylate + NH4(+) + CO2. Hydrolyzes ureidoacrylate to form aminoacrylate and carbamate. The carbamate hydrolyzes spontaneously, thereby releasing one of the nitrogen atoms of the pyrimidine ring as ammonia and one of its carbon atoms as CO2. The sequence is that of Ureidoacrylate amidohydrolase RutB from Escherichia coli O6:H1 (strain CFT073 / ATCC 700928 / UPEC).